A 485-amino-acid chain; its full sequence is UDP-glycosyltransferase 91D1 (485 aa).

Residues serine 296, 355 to 356 (WA), 373 to 381 (HCGSGSIVE), and 395 to 398 (FCDQ) each bind UDP-alpha-D-glucose.

Belongs to the UDP-glycosyltransferase family.

Functionally, may glycosylate diterpenes or flavonols in leaves. This chain is UDP-glycosyltransferase 91D1, found in Stevia rebaudiana (Stevia).